The primary structure comprises 243 residues: tRNA (guanine-N(1)-)-methyltransferase (243 aa).

S-adenosyl-L-methionine contacts are provided by residues glycine 110 and 130 to 135 (VGDYVM).

This sequence belongs to the RNA methyltransferase TrmD family. In terms of assembly, homodimer.

The protein resides in the cytoplasm. It carries out the reaction guanosine(37) in tRNA + S-adenosyl-L-methionine = N(1)-methylguanosine(37) in tRNA + S-adenosyl-L-homocysteine + H(+). Its function is as follows. Specifically methylates guanosine-37 in various tRNAs. This chain is tRNA (guanine-N(1)-)-methyltransferase, found in Treponema denticola (strain ATCC 35405 / DSM 14222 / CIP 103919 / JCM 8153 / KCTC 15104).